Consider the following 22-residue polypeptide: Caerin-3.5 (22 aa).

At Lys-22 the chain carries Lysine amide.

Expressed by the skin dorsal glands.

Its subcellular location is the secreted. Its function is as follows. Shows significant activity against Gram-positive organisms, but is less effective against Gram-negative organisms. The chain is Caerin-3.5 from Ranoidea gracilenta (Dainty green tree frog).